Here is a 323-residue protein sequence, read N- to C-terminus: tRNA U34 carboxymethyltransferase (323 aa).

Carboxy-S-adenosyl-L-methionine is bound by residues Lys-91, Trp-105, Lys-110, Gly-130, 152 to 154 (DPS), 181 to 182 (IE), Met-196, Tyr-200, and Arg-315.

The protein belongs to the class I-like SAM-binding methyltransferase superfamily. CmoB family. In terms of assembly, homotetramer.

The enzyme catalyses carboxy-S-adenosyl-L-methionine + 5-hydroxyuridine(34) in tRNA = 5-carboxymethoxyuridine(34) in tRNA + S-adenosyl-L-homocysteine + H(+). Functionally, catalyzes carboxymethyl transfer from carboxy-S-adenosyl-L-methionine (Cx-SAM) to 5-hydroxyuridine (ho5U) to form 5-carboxymethoxyuridine (cmo5U) at position 34 in tRNAs. The protein is tRNA U34 carboxymethyltransferase of Vibrio atlanticus (strain LGP32) (Vibrio splendidus (strain Mel32)).